The following is a 1497-amino-acid chain: DNA-directed RNA polymerase subunit beta (1497 aa).

It belongs to the RNA polymerase beta chain family. The RNAP catalytic core consists of 2 alpha, 1 beta, 1 beta' and 1 omega subunit. When a sigma factor is associated with the core the holoenzyme is formed, which can initiate transcription.

It carries out the reaction RNA(n) + a ribonucleoside 5'-triphosphate = RNA(n+1) + diphosphate. Functionally, DNA-dependent RNA polymerase catalyzes the transcription of DNA into RNA using the four ribonucleoside triphosphates as substrates. The polypeptide is DNA-directed RNA polymerase subunit beta (Trichlorobacter lovleyi (strain ATCC BAA-1151 / DSM 17278 / SZ) (Geobacter lovleyi)).